Consider the following 380-residue polypeptide: O-methyltransferase ucdC (380 aa).

S-adenosyl-L-methionine is bound by residues 222-223 (GG), Asp247, and Arg283. His287 acts as the Proton acceptor in catalysis.

The protein belongs to the class I-like SAM-binding methyltransferase superfamily. Cation-independent O-methyltransferase family. COMT subfamily.

It functions in the pathway secondary metabolite biosynthesis. Its function is as follows. Nonribosomal peptide synthetase that mediates the biosynthesis of usterphenyllins and uscandidusins, p-terphenyl derivatives. Within the pathway, ucdC catalyzes O-methylation of the terphenyl triol intermediate produced by ucdB to yield terphenyllin carrying two methoxy moieties at C-9 and C-12. The pathway begin with the biosynthesis of 4-hydroxyphenylpyruvate (HPPA) from L-tyrosine, possibly by the aminotransferase ucdG. The nonribosomal peptide synthetase ucdA then condenses two HPPA units to produce atromentin. The key step in this pathway is the reduction and dehydration of atromentin to form a terphenyl triol intermediate, performed by the NAD-dependent dehydrogenase ucdB. Further O-methylation by the methyltransferase ucdC forms terphenyllin carrying two methoxy moieties at C-9 and C-12, and subsequent dihydroxylation at C-3 of ring A and C-15 of ring C by the flavin-dependent oxygenase ucdD leads to 3,15-dihydroxyterphenyllin. Prenylation by ucdE at position C-5 of ring A forms usterphenyllin B, and is followed by a second prenylation at position C-14 of ring C to form usterphenyllin A. The following furan ring formation that leads to uscandidusins A and B was proven to be an unexpected spontaneous non-enzymatic reaction. The chain is O-methyltransferase ucdC from Aspergillus ustus.